The primary structure comprises 78 residues: Small ribosomal subunit protein bS18 (78 aa).

This sequence belongs to the bacterial ribosomal protein bS18 family. As to quaternary structure, part of the 30S ribosomal subunit. Forms a tight heterodimer with protein bS6.

Binds as a heterodimer with protein bS6 to the central domain of the 16S rRNA, where it helps stabilize the platform of the 30S subunit. The sequence is that of Small ribosomal subunit protein bS18 from Rhodospirillum rubrum (strain ATCC 11170 / ATH 1.1.1 / DSM 467 / LMG 4362 / NCIMB 8255 / S1).